A 220-amino-acid polypeptide reads, in one-letter code: Deoxyribose-phosphate aldolase (220 aa).

The active-site Proton donor/acceptor is Asp89. Lys150 (schiff-base intermediate with acetaldehyde) is an active-site residue. Catalysis depends on Lys182, which acts as the Proton donor/acceptor.

This sequence belongs to the DeoC/FbaB aldolase family. DeoC type 1 subfamily.

The protein localises to the cytoplasm. It carries out the reaction 2-deoxy-D-ribose 5-phosphate = D-glyceraldehyde 3-phosphate + acetaldehyde. Its pathway is carbohydrate degradation; 2-deoxy-D-ribose 1-phosphate degradation; D-glyceraldehyde 3-phosphate and acetaldehyde from 2-deoxy-alpha-D-ribose 1-phosphate: step 2/2. Catalyzes a reversible aldol reaction between acetaldehyde and D-glyceraldehyde 3-phosphate to generate 2-deoxy-D-ribose 5-phosphate. In Mycoplasmoides pirum (Mycoplasma pirum), this protein is Deoxyribose-phosphate aldolase.